We begin with the raw amino-acid sequence, 491 residues long: Glutamyl-tRNA(Gln) amidotransferase subunit A (491 aa).

Catalysis depends on charge relay system residues Lys79 and Ser154. Catalysis depends on Ser178, which acts as the Acyl-ester intermediate.

This sequence belongs to the amidase family. GatA subfamily. Heterotrimer of A, B and C subunits.

It catalyses the reaction L-glutamyl-tRNA(Gln) + L-glutamine + ATP + H2O = L-glutaminyl-tRNA(Gln) + L-glutamate + ADP + phosphate + H(+). Functionally, allows the formation of correctly charged Gln-tRNA(Gln) through the transamidation of misacylated Glu-tRNA(Gln) in organisms which lack glutaminyl-tRNA synthetase. The reaction takes place in the presence of glutamine and ATP through an activated gamma-phospho-Glu-tRNA(Gln). The sequence is that of Glutamyl-tRNA(Gln) amidotransferase subunit A from Synechococcus sp. (strain CC9605).